Reading from the N-terminus, the 256-residue chain is Pimeloyl-[acyl-carrier protein] methyl ester esterase (256 aa).

In terms of domain architecture, AB hydrolase-1 spans 15–242; the sequence is HLVLLHGWGL…AAHAPFISHP (228 aa). Substrate is bound by residues Trp-22, 82–83, and 143–147; these read SL and FLALQ. Ser-82 serves as the catalytic Nucleophile. Active-site residues include Asp-207 and His-235. Substrate is bound at residue His-235.

It belongs to the AB hydrolase superfamily. Carboxylesterase BioH family. As to quaternary structure, monomer.

The protein resides in the cytoplasm. The catalysed reaction is 6-carboxyhexanoyl-[ACP] methyl ester + H2O = 6-carboxyhexanoyl-[ACP] + methanol + H(+). Its pathway is cofactor biosynthesis; biotin biosynthesis. The physiological role of BioH is to remove the methyl group introduced by BioC when the pimeloyl moiety is complete. It allows to synthesize pimeloyl-ACP via the fatty acid synthetic pathway through the hydrolysis of the ester bonds of pimeloyl-ACP esters. This Shigella boydii serotype 18 (strain CDC 3083-94 / BS512) protein is Pimeloyl-[acyl-carrier protein] methyl ester esterase.